Reading from the N-terminus, the 240-residue chain is UDP-2,3-diacylglucosamine hydrolase (240 aa).

The Mn(2+) site is built by Asp7, His9, Asp40, Asn78, and His113. Position 78-79 (Asn78–Arg79) interacts with substrate. Substrate is bound by residues Asp121, Ser159, Thr163, Lys166, and His194. 2 residues coordinate Mn(2+): His194 and His196.

It belongs to the LpxH family. Mn(2+) serves as cofactor.

The protein resides in the cell inner membrane. It carries out the reaction UDP-2-N,3-O-bis[(3R)-3-hydroxytetradecanoyl]-alpha-D-glucosamine + H2O = 2-N,3-O-bis[(3R)-3-hydroxytetradecanoyl]-alpha-D-glucosaminyl 1-phosphate + UMP + 2 H(+). Its pathway is glycolipid biosynthesis; lipid IV(A) biosynthesis; lipid IV(A) from (3R)-3-hydroxytetradecanoyl-[acyl-carrier-protein] and UDP-N-acetyl-alpha-D-glucosamine: step 4/6. In terms of biological role, hydrolyzes the pyrophosphate bond of UDP-2,3-diacylglucosamine to yield 2,3-diacylglucosamine 1-phosphate (lipid X) and UMP by catalyzing the attack of water at the alpha-P atom. Involved in the biosynthesis of lipid A, a phosphorylated glycolipid that anchors the lipopolysaccharide to the outer membrane of the cell. The protein is UDP-2,3-diacylglucosamine hydrolase of Pseudomonas putida (strain W619).